The following is a 275-amino-acid chain: tRNA pseudouridine synthase A (275 aa).

Asp-72 acts as the Nucleophile in catalysis. Tyr-133 is a binding site for substrate.

The protein belongs to the tRNA pseudouridine synthase TruA family. Homodimer.

The enzyme catalyses uridine(38/39/40) in tRNA = pseudouridine(38/39/40) in tRNA. Its function is as follows. Formation of pseudouridine at positions 38, 39 and 40 in the anticodon stem and loop of transfer RNAs. The polypeptide is tRNA pseudouridine synthase A (Gluconobacter oxydans (strain 621H) (Gluconobacter suboxydans)).